We begin with the raw amino-acid sequence, 322 residues long: Cytochrome c biogenesis protein CcsA (322 aa).

The next 7 helical transmembrane spans lie at 9–29, 43–63, 70–90, 142–162, 226–246, 259–274, and 287–307; these read ILTHICFSIILIVITIHLITL, GMIATFFCITGLLVSRWIYSG, LYESLIFLSWSFAIIHMVPKI, MLLSYAALLCGSLLSIALLVI, VISLGFTFLTIGILSGAVWAN, ETWAFITWTIFAIYSH, and AIVASMGFLIIWICYFGVNLL.

Belongs to the CcmF/CycK/Ccl1/NrfE/CcsA family. As to quaternary structure, may interact with Ccs1.

Its subcellular location is the plastid. The protein localises to the chloroplast thylakoid membrane. Its function is as follows. Required during biogenesis of c-type cytochromes (cytochrome c6 and cytochrome f) at the step of heme attachment. The chain is Cytochrome c biogenesis protein CcsA from Chloranthus spicatus (Chulantree).